The sequence spans 205 residues: Probable GTP-binding protein EngB (205 aa).

An EngB-type G domain is found at 27 to 201 (TGIEIAFAGR…AVKLDFWFSP (175 aa)). GTP is bound by residues 35–42 (GRSNAGKS), 62–66 (GRTQL), 80–83 (DLPG), 147–150 (TKAD), and 180–182 (FSA). The Mg(2+) site is built by serine 42 and threonine 64.

Belongs to the TRAFAC class TrmE-Era-EngA-EngB-Septin-like GTPase superfamily. EngB GTPase family. Requires Mg(2+) as cofactor.

Necessary for normal cell division and for the maintenance of normal septation. This Haemophilus influenzae (strain PittGG) protein is Probable GTP-binding protein EngB.